Reading from the N-terminus, the 122-residue chain is Large ribosomal subunit protein bL12 (122 aa).

It belongs to the bacterial ribosomal protein bL12 family. In terms of assembly, homodimer. Part of the ribosomal stalk of the 50S ribosomal subunit. Forms a multimeric L10(L12)X complex, where L10 forms an elongated spine to which 2 to 4 L12 dimers bind in a sequential fashion. Binds GTP-bound translation factors.

In terms of biological role, forms part of the ribosomal stalk which helps the ribosome interact with GTP-bound translation factors. Is thus essential for accurate translation. This Xylella fastidiosa (strain 9a5c) protein is Large ribosomal subunit protein bL12.